Here is a 427-residue protein sequence, read N- to C-terminus: Hydroxylamine reductase (427 aa).

Residues C3, C6, C15, and C21 each contribute to the [4Fe-4S] cluster site. H129, E153, C197, C283, C311, C336, E370, and K372 together coordinate hybrid [4Fe-2O-2S] cluster. C283 carries the cysteine persulfide modification.

This sequence belongs to the HCP family. [4Fe-4S] cluster serves as cofactor. The cofactor is hybrid [4Fe-2O-2S] cluster.

Its subcellular location is the cytoplasm. The catalysed reaction is A + NH4(+) + H2O = hydroxylamine + AH2 + H(+). Catalyzes the reduction of hydroxylamine to form NH(3) and H(2)O. The chain is Hydroxylamine reductase from Moorella thermoacetica (strain ATCC 39073 / JCM 9320).